The chain runs to 423 residues: Imidazolonepropionase (423 aa).

2 residues coordinate Fe(3+): His78 and His80. Zn(2+) is bound by residues His78 and His80. 3 residues coordinate 4-imidazolone-5-propanoate: Arg87, Tyr150, and His183. Tyr150 serves as a coordination point for N-formimidoyl-L-glutamate. His247 serves as a coordination point for Fe(3+). A Zn(2+)-binding site is contributed by His247. Glu250 contacts 4-imidazolone-5-propanoate. Asp322 is a Fe(3+) binding site. Zn(2+) is bound at residue Asp322. Residues Asn324 and Gly326 each contribute to the N-formimidoyl-L-glutamate site. A 4-imidazolone-5-propanoate-binding site is contributed by Ser327.

Belongs to the metallo-dependent hydrolases superfamily. HutI family. Zn(2+) is required as a cofactor. The cofactor is Fe(3+).

It localises to the cytoplasm. It carries out the reaction 4-imidazolone-5-propanoate + H2O = N-formimidoyl-L-glutamate. It participates in amino-acid degradation; L-histidine degradation into L-glutamate; N-formimidoyl-L-glutamate from L-histidine: step 3/3. In terms of biological role, catalyzes the hydrolytic cleavage of the carbon-nitrogen bond in imidazolone-5-propanoate to yield N-formimidoyl-L-glutamate. It is the third step in the universal histidine degradation pathway. The sequence is that of Imidazolonepropionase from Bacillus cereus (strain B4264).